Reading from the N-terminus, the 326-residue chain is L-Ala--D-Glu endopeptidase (326 aa).

An N-terminal signal peptide occupies residues Met-1 to Ala-19. 4 residues coordinate Zn(2+): His-204, Asp-208, His-292, and His-294.

It belongs to the peptidase M23B family. Zn(2+) serves as cofactor.

Its function is as follows. L-Ala--D-Glu endopeptidase involved in production of single L-alanine side chains from tetrapeptides in the spore cortex peptidoglycan. Therefore, is required for the endospore cortex maturation. The polypeptide is L-Ala--D-Glu endopeptidase (lytH) (Bacillus subtilis (strain 168)).